Here is a 146-residue protein sequence, read N- to C-terminus: Transcriptional regulator MraZ (146 aa).

2 consecutive SpoVT-AbrB domains span residues 4-46 and 75-118; these read SYEK…SKKS and TIEV…SKEK.

This sequence belongs to the MraZ family. Forms oligomers.

It localises to the cytoplasm. The protein localises to the nucleoid. The chain is Transcriptional regulator MraZ from Mycoplasma mobile (strain ATCC 43663 / 163K / NCTC 11711) (Mesomycoplasma mobile).